The following is a 471-amino-acid chain: Proton-coupled amino acid transporter-like protein pathetic (471 aa).

Asparagine 61 is a glycosylation site (N-linked (GlcNAc...) asparagine). The next 10 membrane-spanning stretches (helical) occupy residues 81 to 101 (FAFMCSGLIMGIFSTIFTAFI), 153 to 173 (ILFGLFLTYFGTCSVYTVIVA), 187 to 207 (AVSLRMLICIMLVPLILIAWV), 216 to 236 (VSMVANVFMGLGLGITFYYLV), 253 to 273 (LPQFFSITIFAMEAIGVVMPL), 283 to 303 (FLGICGVLSQGMSGVTLIYML), 337 to 357 (LISLAVYCTFGLQFFVCLEII), 375 to 395 (VLRTVLVTAAVVLAVAVPTIG), 397 to 417 (FMGLIGAFCFSILGLIFPVVI), and 432 to 452 (WILWKNAIITLCGIGALVFGT).

This sequence belongs to the amino acid/polyamine transporter 2 family. In terms of tissue distribution, in third instar larvae, expressed at highest levels in the brain and digestive system with particularly high levels in surface glia of the brain (at protein level). In third instar larvae, expressed in all cells of the body wall (at protein level). Within the body wall of third instar larvae, most highly expressed in epithelial cells and sensory neurons. Expressed at a similar level in all da neurons (at protein level). Widely expressed during embryonic and late larval stages. Levels are highly dynamic in embryogenesis with surges of expression in many structures, including muscle primordia, salivary glands, proventriculus, trachea and gonads. Expressed in all or most cells of larval imaginal disks. Expression is also particularly strong in the pouch and hinge regions of the wing disk and in the morphogenetic furrow of the eye disk.

It localises to the cell membrane. The protein resides in the lysosome membrane. It is found in the late endosome membrane. Its subcellular location is the cell projection. The protein localises to the axon. It localises to the dendrite. The protein resides in the perikaryon. It is found in the cytoplasm. Functionally, amino acid transporter which has pH-dependent electrogenic transport activity for alanine and glycine but not for proline. Plays a role in positive regulation of growth by directly or indirectly modulating the effects of the TOR signaling pathway. Required in a cell-autonomous manner for dendrite growth in neurons with large dendrite arbors. The polypeptide is Proton-coupled amino acid transporter-like protein pathetic (Drosophila melanogaster (Fruit fly)).